The chain runs to 291 residues: Signal peptidase I (291 aa).

Residues M1–S45 lie on the Cytoplasmic side of the membrane. The chain crosses the membrane as a helical span at residues F46 to V66. Topologically, residues P67–D291 are periplasmic. Catalysis depends on residues S70 and K133.

It belongs to the peptidase S26 family.

It is found in the cell inner membrane. The enzyme catalyses Cleavage of hydrophobic, N-terminal signal or leader sequences from secreted and periplasmic proteins.. The protein is Signal peptidase I (lepB) of Rickettsia bellii (strain RML369-C).